A 351-amino-acid chain; its full sequence is Porphobilinogen deaminase (351 aa).

Position 242 is an S-(dipyrrolylmethanemethyl)cysteine (Cys242).

It belongs to the HMBS family. In terms of assembly, monomer. It depends on dipyrromethane as a cofactor.

The catalysed reaction is 4 porphobilinogen + H2O = hydroxymethylbilane + 4 NH4(+). It functions in the pathway porphyrin-containing compound metabolism; protoporphyrin-IX biosynthesis; coproporphyrinogen-III from 5-aminolevulinate: step 2/4. In terms of biological role, tetrapolymerization of the monopyrrole PBG into the hydroxymethylbilane pre-uroporphyrinogen in several discrete steps. This chain is Porphobilinogen deaminase, found in Rickettsia peacockii (strain Rustic).